The chain runs to 400 residues: Methylthioribose kinase (400 aa).

ATP-binding positions include N44, K61, and 115-117 (EDL). D233 serves as a coordination point for substrate. 250-252 (DPE) lines the ATP pocket. Residue R340 participates in substrate binding.

It belongs to the methylthioribose kinase family. In terms of assembly, homodimer.

The catalysed reaction is 5-(methylsulfanyl)-D-ribose + ATP = 5-(methylsulfanyl)-alpha-D-ribose 1-phosphate + ADP + H(+). The protein operates within amino-acid biosynthesis; L-methionine biosynthesis via salvage pathway; S-methyl-5-thio-alpha-D-ribose 1-phosphate from S-methyl-5'-thioadenosine (hydrolase route): step 2/2. Its function is as follows. Catalyzes the phosphorylation of methylthioribose into methylthioribose-1-phosphate. In Geobacillus sp. (strain WCH70), this protein is Methylthioribose kinase.